A 418-amino-acid polypeptide reads, in one-letter code: Serine hydroxymethyltransferase (418 aa).

(6S)-5,6,7,8-tetrahydrofolate is bound by residues Leu-121 and 125 to 127 (GHL). N6-(pyridoxal phosphate)lysine is present on Lys-230. 356-358 (SPF) serves as a coordination point for (6S)-5,6,7,8-tetrahydrofolate.

Belongs to the SHMT family. In terms of assembly, homodimer. The cofactor is pyridoxal 5'-phosphate.

The protein localises to the cytoplasm. The enzyme catalyses (6R)-5,10-methylene-5,6,7,8-tetrahydrofolate + glycine + H2O = (6S)-5,6,7,8-tetrahydrofolate + L-serine. Its pathway is one-carbon metabolism; tetrahydrofolate interconversion. The protein operates within amino-acid biosynthesis; glycine biosynthesis; glycine from L-serine: step 1/1. In terms of biological role, catalyzes the reversible interconversion of serine and glycine with tetrahydrofolate (THF) serving as the one-carbon carrier. This reaction serves as the major source of one-carbon groups required for the biosynthesis of purines, thymidylate, methionine, and other important biomolecules. Also exhibits THF-independent aldolase activity toward beta-hydroxyamino acids, producing glycine and aldehydes, via a retro-aldol mechanism. The protein is Serine hydroxymethyltransferase of Idiomarina loihiensis (strain ATCC BAA-735 / DSM 15497 / L2-TR).